A 253-amino-acid chain; its full sequence is Triosephosphate isomerase (253 aa).

9 to 11 is a substrate binding site; sequence NWK. The active-site Electrophile is the His97. Residue Glu169 is the Proton acceptor of the active site. Substrate-binding positions include Gly175, Ser215, and 236-237; that span reads GG.

The protein belongs to the triosephosphate isomerase family. In terms of assembly, homodimer.

Its subcellular location is the cytoplasm. It carries out the reaction D-glyceraldehyde 3-phosphate = dihydroxyacetone phosphate. Its pathway is carbohydrate biosynthesis; gluconeogenesis. It functions in the pathway carbohydrate degradation; glycolysis; D-glyceraldehyde 3-phosphate from glycerone phosphate: step 1/1. Its function is as follows. Involved in the gluconeogenesis. Catalyzes stereospecifically the conversion of dihydroxyacetone phosphate (DHAP) to D-glyceraldehyde-3-phosphate (G3P). The protein is Triosephosphate isomerase of Staphylococcus saprophyticus subsp. saprophyticus (strain ATCC 15305 / DSM 20229 / NCIMB 8711 / NCTC 7292 / S-41).